A 334-amino-acid polypeptide reads, in one-letter code: Ketol-acid reductoisomerase (NADP(+)) (334 aa).

Positions 1–181 constitute a KARI N-terminal Rossmann domain; it reads MTTVYYDQDV…GATRAGVIET (181 aa). Residues 25–28, arginine 48, serine 52, and 82–85 each bind NADP(+); these read YGSQ and DEIQ. The active site involves histidine 107. Glycine 133 contributes to the NADP(+) binding site. Residues 182-327 enclose the KARI C-terminal knotted domain; it reads TFKEETETDL…RELREMMPFI (146 aa). 4 residues coordinate Mg(2+): aspartate 190, glutamate 194, glutamate 226, and glutamate 230. Residue serine 251 participates in substrate binding.

Belongs to the ketol-acid reductoisomerase family. Requires Mg(2+) as cofactor.

It carries out the reaction (2R)-2,3-dihydroxy-3-methylbutanoate + NADP(+) = (2S)-2-acetolactate + NADPH + H(+). The catalysed reaction is (2R,3R)-2,3-dihydroxy-3-methylpentanoate + NADP(+) = (S)-2-ethyl-2-hydroxy-3-oxobutanoate + NADPH + H(+). It functions in the pathway amino-acid biosynthesis; L-isoleucine biosynthesis; L-isoleucine from 2-oxobutanoate: step 2/4. It participates in amino-acid biosynthesis; L-valine biosynthesis; L-valine from pyruvate: step 2/4. Functionally, involved in the biosynthesis of branched-chain amino acids (BCAA). Catalyzes an alkyl-migration followed by a ketol-acid reduction of (S)-2-acetolactate (S2AL) to yield (R)-2,3-dihydroxy-isovalerate. In the isomerase reaction, S2AL is rearranged via a Mg-dependent methyl migration to produce 3-hydroxy-3-methyl-2-ketobutyrate (HMKB). In the reductase reaction, this 2-ketoacid undergoes a metal-dependent reduction by NADPH to yield (R)-2,3-dihydroxy-isovalerate. This Staphylococcus aureus (strain MSSA476) protein is Ketol-acid reductoisomerase (NADP(+)).